A 427-amino-acid chain; its full sequence is Enolase (427 aa).

Residue Gln-164 coordinates (2R)-2-phosphoglycerate. Glu-206 functions as the Proton donor in the catalytic mechanism. Positions 243, 284, and 311 each coordinate Mg(2+). Lys-336, Arg-365, Ser-366, and Lys-387 together coordinate (2R)-2-phosphoglycerate. The active-site Proton acceptor is the Lys-336.

The protein belongs to the enolase family. It depends on Mg(2+) as a cofactor.

It is found in the cytoplasm. The protein resides in the secreted. The protein localises to the cell surface. It catalyses the reaction (2R)-2-phosphoglycerate = phosphoenolpyruvate + H2O. It functions in the pathway carbohydrate degradation; glycolysis; pyruvate from D-glyceraldehyde 3-phosphate: step 4/5. Catalyzes the reversible conversion of 2-phosphoglycerate (2-PG) into phosphoenolpyruvate (PEP). It is essential for the degradation of carbohydrates via glycolysis. The polypeptide is Enolase (Synechococcus sp. (strain JA-2-3B'a(2-13)) (Cyanobacteria bacterium Yellowstone B-Prime)).